Here is a 511-residue protein sequence, read N- to C-terminus: Ribose import ATP-binding protein RbsA 3 (511 aa).

2 ABC transporter domains span residues leucine 21–aspartate 257 and arginine 256–alanine 511. Glycine 53–serine 60 is an ATP binding site.

This sequence belongs to the ABC transporter superfamily. Ribose importer (TC 3.A.1.2.1) family. The complex is composed of an ATP-binding protein (RbsA), two transmembrane proteins (RbsC) and a solute-binding protein (RbsB).

Its subcellular location is the cell inner membrane. The enzyme catalyses D-ribose(out) + ATP + H2O = D-ribose(in) + ADP + phosphate + H(+). Part of the ABC transporter complex RbsABC involved in ribose import. Responsible for energy coupling to the transport system. This is Ribose import ATP-binding protein RbsA 3 from Rhizobium etli (strain ATCC 51251 / DSM 11541 / JCM 21823 / NBRC 15573 / CFN 42).